An 84-amino-acid chain; its full sequence is Putative movement protein (84 aa).

The helical transmembrane segment at 15–35 threads the bilayer; sequence ALHGILVAFIAVLCLIGCLWA.

As to quaternary structure, interacts with the capsid protein (CP). Part of a MP-CP-viral DNA complex.

The protein localises to the host membrane. In terms of biological role, involved in the viral transport within, and between cells. This chain is Putative movement protein, found in Miscanthus streak virus (isolate 91) (MiSV).